The primary structure comprises 1240 residues: Neurofascin (1240 aa).

A signal peptide spans 1-24; the sequence is MARQQAPPWVHIALILFLLSLGGA. Residues 25 to 1110 lie on the Extracellular side of the membrane; the sequence is IEIPMDPSIQ…NQADIATQGW (1086 aa). Ig-like C2-type domains lie at 41 to 137, 143 to 230, 244 to 332, 337 to 424, 430 to 517, and 521 to 603; these read PTIT…LQVS, PKEN…NPFT, PSFM…ISVR, PYWL…AFVS, PRML…VRLE, and PTRI…QDLA. 4 disulfide bridges follow: C63-C118, C162-C213, C268-C316, and C358-C408. N-linked (GlcNAc...) asparagine glycosylation occurs at N305. 2 N-linked (GlcNAc...) asparagine glycosylation sites follow: N409 and N446. Disulfide bonds link C452–C501 and C543–C592. Phosphotyrosine is present on Y481. Residue N483 is glycosylated (N-linked (GlcNAc...) asparagine). S485 is subject to Phosphoserine. Fibronectin type-III domains follow at residues 630-725, 727-823, 827-923, and 1007-1099; these read RPRD…TSGA, PESN…SGED, APRR…PNEA, and APDE…TAYT. A disordered region spans residues 710-740; that stretch reads SSHPSLPSERYRTSGAPPESNPSDVKGEGTR. N-linked (GlcNAc...) asparagine glycans are attached at residues N752, N778, N866, and N881. The disordered stretch occupies residues 902 to 942; sequence ARTQVGSGEAATEESPAPPNEATPTAAPPTLPPTTVGTTGL. Residues 907–916 show a composition bias toward low complexity; sequence GSGEAATEES. Residues 917 to 933 show a composition bias toward pro residues; the sequence is PAPPNEATPTAAPPTLP. Residues 1111–1131 traverse the membrane as a helical segment; sequence FIGLMCAIALLVLILLIVCFI. Over 1132–1240 the chain is Cytoplasmic; it reads KRSRGGKYPV…SPVNAIYSLA (109 aa). Residues 1141–1240 are disordered; the sequence is VREKKDVPLG…SPVNAIYSLA (100 aa). Over residues 1154 to 1165 the composition is skewed to acidic residues; the sequence is PKEEDGSFDYSD. 7 positions are modified to phosphoserine: S1160, S1174, S1187, S1190, S1226, S1227, and S1231. The segment covering 1171 to 1184 has biased composition (polar residues); sequence LQGSQTSLDGTIKQ.

Belongs to the immunoglobulin superfamily. L1/neurofascin/NgCAM family. Horseshoe-shaped homodimer. Probable constituent of a NFASC/NRCAM/ankyrin-G complex. Associates with the sodium channel beta-1 (SCN1B) and beta-3 (SCN3B) subunits. Interacts with GLDN/gliomedin. Interacts with MYOC.

It is found in the cell membrane. Functionally, cell adhesion, ankyrin-binding protein which may be involved in neurite extension, axonal guidance, synaptogenesis, myelination and neuron-glial cell interactions. The sequence is that of Neurofascin (Nfasc) from Mus musculus (Mouse).